We begin with the raw amino-acid sequence, 89 residues long: Small ribosomal subunit protein uS15 (89 aa).

It belongs to the universal ribosomal protein uS15 family. In terms of assembly, part of the 30S ribosomal subunit. Forms a bridge to the 50S subunit in the 70S ribosome, contacting the 23S rRNA.

Its function is as follows. One of the primary rRNA binding proteins, it binds directly to 16S rRNA where it helps nucleate assembly of the platform of the 30S subunit by binding and bridging several RNA helices of the 16S rRNA. Forms an intersubunit bridge (bridge B4) with the 23S rRNA of the 50S subunit in the ribosome. This Bifidobacterium longum subsp. infantis (strain ATCC 15697 / DSM 20088 / JCM 1222 / NCTC 11817 / S12) protein is Small ribosomal subunit protein uS15.